Here is a 962-residue protein sequence, read N- to C-terminus: Exportin-T (962 aa).

An N-acetylmethionine modification is found at Met1. Positions 1–385 (MDEQALLGLN…MLAVMKKLTY (385 aa)) are necessary for interaction with Ran, nuclear localization and nuclear import. The tract at residues 443–962 (FMEVEVAIRL…LKVFFQRAKP (520 aa)) is necessary for tRNA-binding, cytoplasmic localization and nuclear export. Position 634 is an N6-acetyllysine (Lys634).

It belongs to the exportin family. As to quaternary structure, found in a complex with XPOT, Ran and tRNA. Probably found in a complex with nucleoporins. Interacts with Ran and tRNA in a GTP-dependent manner.

It is found in the nucleus. Its subcellular location is the cytoplasm. Mediates the nuclear export of aminoacylated tRNAs. In the nucleus binds to tRNA and to the GTPase Ran in its active GTP-bound form. Docking of this trimeric complex to the nuclear pore complex (NPC) is mediated through binding to nucleoporins. Upon transit of a nuclear export complex into the cytoplasm, disassembling of the complex and hydrolysis of Ran-GTP to Ran-GDP (induced by RANBP1 and RANGAP1, respectively) cause release of the tRNA from the export receptor. XPOT then return to the nuclear compartment and mediate another round of transport. The directionality of nuclear export is thought to be conferred by an asymmetric distribution of the GTP- and GDP-bound forms of Ran between the cytoplasm and nucleus. This chain is Exportin-T (XPOT), found in Homo sapiens (Human).